The following is a 95-amino-acid chain: Integration host factor subunit beta (95 aa).

The protein belongs to the bacterial histone-like protein family. Heterodimer of an alpha and a beta chain.

Its function is as follows. This protein is one of the two subunits of integration host factor, a specific DNA-binding protein that functions in genetic recombination as well as in transcriptional and translational control. Involved in hydrogenase gene expression. This chain is Integration host factor subunit beta (ihfB), found in Rhodobacter capsulatus (Rhodopseudomonas capsulata).